The primary structure comprises 388 residues: tRNA 2-selenouridine synthase (388 aa).

The region spanning 15–138 is the Rhodanese domain; the sequence is FTADTPLIDV…ARQFLINTID (124 aa). Cys98 serves as the catalytic S-selanylcysteine intermediate.

This sequence belongs to the SelU family. As to quaternary structure, monomer.

The enzyme catalyses 5-methylaminomethyl-2-thiouridine(34) in tRNA + selenophosphate + (2E)-geranyl diphosphate + H2O + H(+) = 5-methylaminomethyl-2-selenouridine(34) in tRNA + (2E)-thiogeraniol + phosphate + diphosphate. It catalyses the reaction 5-methylaminomethyl-2-thiouridine(34) in tRNA + (2E)-geranyl diphosphate = 5-methylaminomethyl-S-(2E)-geranyl-thiouridine(34) in tRNA + diphosphate. The catalysed reaction is 5-methylaminomethyl-S-(2E)-geranyl-thiouridine(34) in tRNA + selenophosphate + H(+) = 5-methylaminomethyl-2-(Se-phospho)selenouridine(34) in tRNA + (2E)-thiogeraniol. It carries out the reaction 5-methylaminomethyl-2-(Se-phospho)selenouridine(34) in tRNA + H2O = 5-methylaminomethyl-2-selenouridine(34) in tRNA + phosphate. In terms of biological role, involved in the post-transcriptional modification of the uridine at the wobble position (U34) of tRNA(Lys), tRNA(Glu) and tRNA(Gln). Catalyzes the conversion of 2-thiouridine (S2U-RNA) to 2-selenouridine (Se2U-RNA). Acts in a two-step process involving geranylation of 2-thiouridine (S2U) to S-geranyl-2-thiouridine (geS2U) and subsequent selenation of the latter derivative to 2-selenouridine (Se2U) in the tRNA chain. This Nitrosomonas eutropha (strain DSM 101675 / C91 / Nm57) protein is tRNA 2-selenouridine synthase.